A 377-amino-acid polypeptide reads, in one-letter code: Lipoyl synthase, mitochondrial (377 aa).

The N-terminal 77 residues, 1 to 77 (MFRRGGRILN…LPNGSVHKRL (77 aa)), are a transit peptide targeting the mitochondrion. 7 residues coordinate [4Fe-4S] cluster: C107, C112, C118, C138, C142, C145, and S353. The region spanning 123 to 342 (DKTRATATIM…RKRAEELGFL (220 aa)) is the Radical SAM core domain.

It belongs to the radical SAM superfamily. Lipoyl synthase family. Requires [4Fe-4S] cluster as cofactor.

The protein resides in the mitochondrion. It catalyses the reaction [[Fe-S] cluster scaffold protein carrying a second [4Fe-4S](2+) cluster] + N(6)-octanoyl-L-lysyl-[protein] + 2 oxidized [2Fe-2S]-[ferredoxin] + 2 S-adenosyl-L-methionine + 4 H(+) = [[Fe-S] cluster scaffold protein] + N(6)-[(R)-dihydrolipoyl]-L-lysyl-[protein] + 4 Fe(3+) + 2 hydrogen sulfide + 2 5'-deoxyadenosine + 2 L-methionine + 2 reduced [2Fe-2S]-[ferredoxin]. It participates in protein modification; protein lipoylation via endogenous pathway; protein N(6)-(lipoyl)lysine from octanoyl-[acyl-carrier-protein]: step 2/2. Catalyzes the radical-mediated insertion of two sulfur atoms into the C-6 and C-8 positions of the octanoyl moiety bound to the lipoyl domains of lipoate-dependent enzymes, thereby converting the octanoylated domains into lipoylated derivatives. The chain is Lipoyl synthase, mitochondrial from Schizosaccharomyces japonicus (strain yFS275 / FY16936) (Fission yeast).